A 314-amino-acid chain; its full sequence is MSAYLHCLSHTPLVGYVDPVAEVLAEVDEVVAAARARIAAFDPQLVFLFAPDHYNGFFYDVMPSFCIGMAATAIGDFHSLAGPLDVPRETAEACAAAVLEAGVDAAVSYRMQVDHGFAQPLELLLGGLAEKPVVPVFINGVAVPLPGFQRARLLGEAIGRFARSTGKRVLFLGSGGLSHQPPVPELAKVDARMADRLLGSGRDLPTDERQARQQRVISAAEGFVADQNSLHPLNPEWDNHFLDLLEQRRFAELDGLGNAELSALAGKSTHEVKTWVTAFAALSAFGPYQAHERYYRPIPEWIAGFGSLSAHSLS.

Residue His115 is the Proton donor of the active site. His179 functions as the Proton acceptor in the catalytic mechanism.

It belongs to the LigB/MhpB extradiol dioxygenase family. As to quaternary structure, homotetramer. Fe(2+) serves as cofactor.

The catalysed reaction is 3-(2,3-dihydroxyphenyl)propanoate + O2 = (2Z,4E)-2-hydroxy-6-oxonona-2,4-dienedioate + H(+). It carries out the reaction (2E)-3-(2,3-dihydroxyphenyl)prop-2-enoate + O2 = (2Z,4E,7E)-2-hydroxy-6-oxonona-2,4,7-trienedioate + H(+). It participates in aromatic compound metabolism; 3-phenylpropanoate degradation. Its function is as follows. Catalyzes the non-heme iron(II)-dependent oxidative cleavage of 2,3-dihydroxyphenylpropionic acid and 2,3-dihydroxicinnamic acid into 2-hydroxy-6-ketononadienedioate and 2-hydroxy-6-ketononatrienedioate, respectively. This chain is 2,3-dihydroxyphenylpropionate/2,3-dihydroxicinnamic acid 1,2-dioxygenase 1, found in Pseudomonas putida (Arthrobacter siderocapsulatus).